A 350-amino-acid polypeptide reads, in one-letter code: Fe(3+) ions import ATP-binding protein FbpC (350 aa).

Residues 4–236 (LDIINLSKSF…PNDEQTAHFL (233 aa)) form the ABC transporter domain. 36–43 (GPSGSGKT) lines the ATP pocket.

This sequence belongs to the ABC transporter superfamily. Fe(3+) ion importer (TC 3.A.1.10) family. The complex is composed of two ATP-binding proteins (FbpC), two transmembrane proteins (FbpB) and a solute-binding protein (FbpA).

Its subcellular location is the cell inner membrane. It carries out the reaction Fe(3+)(out) + ATP + H2O = Fe(3+)(in) + ADP + phosphate + H(+). Functionally, part of the ABC transporter complex FbpABC involved in Fe(3+) ions import. Responsible for energy coupling to the transport system. The protein is Fe(3+) ions import ATP-binding protein FbpC of Pseudomonas fluorescens (strain Pf0-1).